Here is a 152-residue protein sequence, read N- to C-terminus: Endoribonuclease YbeY (152 aa).

Residues H117, H121, and H127 each coordinate Zn(2+).

Belongs to the endoribonuclease YbeY family. Zn(2+) serves as cofactor.

The protein localises to the cytoplasm. In terms of biological role, single strand-specific metallo-endoribonuclease involved in late-stage 70S ribosome quality control and in maturation of the 3' terminus of the 16S rRNA. The polypeptide is Endoribonuclease YbeY (Borreliella afzelii (strain PKo) (Borrelia afzelii)).